The primary structure comprises 824 residues: Mucosa-associated lymphoid tissue lymphoma translocation protein 1 (824 aa).

The interval 1-27 (MSLLGDPLQALPPSAAPTGPLLAPPAG) is disordered. The residue at position 2 (Ser-2) is an N-acetylserine. Residues 11 to 27 (LPPSAAPTGPLLAPPAG) show a composition bias toward low complexity. Positions 39–126 (RRLSELLDQA…EVLQLLSPPG (88 aa)) constitute a Death domain. 2 Ig-like C2-type domains span residues 125-201 (PGIK…FEFS) and 212-305 (PESF…KKVE). A Phosphoserine modification is found at Ser-135. Cystine bridges form between Cys-147–Cys-190 and Cys-248–Cys-290. The caspase-like stretch occupies residues 348–562 (IGNMNYREHP…SLSEKRALTD (215 aa)). The Nuclear export signal signature appears at 369-376 (LTNLLRQL). Catalysis depends on residues His-415 and Cys-464.

Belongs to the peptidase C14B family. Homooligomer; forms oligomers which bind to TRAF6. Forms a complex with CARD14 and MALT1; resulting in the formation of a CBM (CARD14-BCL10-MALT1) complex. Forms a complex with CARD11 and MALT1; resulting in the formation of a CBM (CARD11-BCL10-MALT1) complex. Forms a complex with CARD9 and MALT1; resulting in the formation of a CBM (CARD9-BCL10-MALT1) complex. As to expression, highly expressed in peripheral blood mononuclear cells. Detected at lower levels in bone marrow, thymus and lymph node, and at very low levels in colon and lung.

The protein localises to the cytoplasm. It localises to the perinuclear region. It is found in the nucleus. Functionally, protease that enhances BCL10-induced activation: acts via formation of CBM complexes that channel adaptive and innate immune signaling downstream of CARD domain-containing proteins (CARD9, CARD11 and CARD14) to activate NF-kappa-B and MAP kinase p38 pathways which stimulate expression of genes encoding pro-inflammatory cytokines and chemokines. Mediates BCL10 cleavage: MALT1-dependent BCL10 cleavage plays an important role in T-cell antigen receptor-induced integrin adhesion. Involved in the induction of T helper 17 cells (Th17) differentiation. Cleaves RC3H1 and ZC3H12A in response to T-cell receptor (TCR) stimulation which releases their cooperatively repressed targets to promote Th17 cell differentiation. Also mediates cleavage of N4BP1 in T-cells following TCR-mediated activation, leading to N4BP1 inactivation. May also have ubiquitin ligase activity: binds to TRAF6, inducing TRAF6 oligomerization and activation of its ligase activity. The polypeptide is Mucosa-associated lymphoid tissue lymphoma translocation protein 1 (Homo sapiens (Human)).